A 314-amino-acid chain; its full sequence is Methionyl-tRNA formyltransferase (314 aa).

(6S)-5,6,7,8-tetrahydrofolate is bound at residue 110–113 (SLLP).

It belongs to the Fmt family.

The enzyme catalyses L-methionyl-tRNA(fMet) + (6R)-10-formyltetrahydrofolate = N-formyl-L-methionyl-tRNA(fMet) + (6S)-5,6,7,8-tetrahydrofolate + H(+). Attaches a formyl group to the free amino group of methionyl-tRNA(fMet). The formyl group appears to play a dual role in the initiator identity of N-formylmethionyl-tRNA by promoting its recognition by IF2 and preventing the misappropriation of this tRNA by the elongation apparatus. The polypeptide is Methionyl-tRNA formyltransferase (Lactobacillus johnsonii (strain CNCM I-12250 / La1 / NCC 533)).